Consider the following 273-residue polypeptide: 1,4-dihydroxy-2-naphthoyl-CoA synthase (273 aa).

Substrate contacts are provided by residues Arg34, 73 to 77, Tyr85, 117 to 121, Thr143, Ser149, Tyr246, and Lys261; these read SGGDQ and YAVGG. Position 142 to 144 (142 to 144) interacts with hydrogencarbonate; the sequence is QTG. Basic and acidic residues predominate over residues 254–265; sequence GRDAFKEKRDPD. A disordered region spans residues 254–273; sequence GRDAFKEKRDPDFDQFPKFP.

It belongs to the enoyl-CoA hydratase/isomerase family. MenB subfamily. The cofactor is hydrogencarbonate.

It carries out the reaction 2-succinylbenzoyl-CoA + H(+) = 1,4-dihydroxy-2-naphthoyl-CoA + H2O. It participates in quinol/quinone metabolism; 1,4-dihydroxy-2-naphthoate biosynthesis; 1,4-dihydroxy-2-naphthoate from chorismate: step 6/7. Its pathway is quinol/quinone metabolism; menaquinone biosynthesis. In terms of biological role, converts o-succinylbenzoyl-CoA (OSB-CoA) to 1,4-dihydroxy-2-naphthoyl-CoA (DHNA-CoA). The protein is 1,4-dihydroxy-2-naphthoyl-CoA synthase of Staphylococcus aureus (strain MSSA476).